We begin with the raw amino-acid sequence, 407 residues long: 5-aminolevulinate synthase 2 (407 aa).

Substrate-binding residues include Arg-21 and Ser-137. Pyridoxal 5'-phosphate contacts are provided by Ser-189, His-217, and Thr-245. Lys-248 is a catalytic residue. N6-(pyridoxal phosphate)lysine is present on Lys-248. Pyridoxal 5'-phosphate-binding residues include Thr-277 and Thr-278. Thr-363 contacts substrate.

Belongs to the class-II pyridoxal-phosphate-dependent aminotransferase family. As to quaternary structure, homodimer. It depends on pyridoxal 5'-phosphate as a cofactor.

The enzyme catalyses succinyl-CoA + glycine + H(+) = 5-aminolevulinate + CO2 + CoA. The protein operates within porphyrin-containing compound metabolism; protoporphyrin-IX biosynthesis; 5-aminolevulinate from glycine: step 1/1. The polypeptide is 5-aminolevulinate synthase 2 (hemT) (Cereibacter sphaeroides (strain ATCC 17023 / DSM 158 / JCM 6121 / CCUG 31486 / LMG 2827 / NBRC 12203 / NCIMB 8253 / ATH 2.4.1.) (Rhodobacter sphaeroides)).